A 627-amino-acid polypeptide reads, in one-letter code: 1-deoxy-D-xylulose-5-phosphate synthase (627 aa).

Residues His75 and 116-118 (AHS) each bind thiamine diphosphate. Residue Asp147 coordinates Mg(2+). Thiamine diphosphate is bound by residues 148–149 (GA), Asn177, Tyr284, and Glu366. A Mg(2+)-binding site is contributed by Asn177.

This sequence belongs to the transketolase family. DXPS subfamily. Homodimer. It depends on Mg(2+) as a cofactor. Requires thiamine diphosphate as cofactor.

It carries out the reaction D-glyceraldehyde 3-phosphate + pyruvate + H(+) = 1-deoxy-D-xylulose 5-phosphate + CO2. Its pathway is metabolic intermediate biosynthesis; 1-deoxy-D-xylulose 5-phosphate biosynthesis; 1-deoxy-D-xylulose 5-phosphate from D-glyceraldehyde 3-phosphate and pyruvate: step 1/1. In terms of biological role, catalyzes the acyloin condensation reaction between C atoms 2 and 3 of pyruvate and glyceraldehyde 3-phosphate to yield 1-deoxy-D-xylulose-5-phosphate (DXP). The protein is 1-deoxy-D-xylulose-5-phosphate synthase of Bordetella petrii (strain ATCC BAA-461 / DSM 12804 / CCUG 43448).